The primary structure comprises 143 residues: NADH-quinone oxidoreductase subunit A (143 aa).

3 helical membrane passes run 12-32, 61-81, and 90-110; these read YIVGSVFLCVFMLLCGYFLGG, FYLIAMIFVIFDVEGIYLYIW, and WIGFIEVCIFVFILLISLIYA.

The protein belongs to the complex I subunit 3 family. In terms of assembly, NDH-1 is composed of 13 different subunits. Subunits NuoA, H, J, K, L, M, N constitute the membrane sector of the complex.

Its subcellular location is the cell inner membrane. The enzyme catalyses a quinone + NADH + 5 H(+)(in) = a quinol + NAD(+) + 4 H(+)(out). NDH-1 shuttles electrons from NADH, via FMN and iron-sulfur (Fe-S) centers, to quinones in the respiratory chain. The immediate electron acceptor for the enzyme in this species is believed to be ubiquinone. Couples the redox reaction to proton translocation (for every two electrons transferred, four hydrogen ions are translocated across the cytoplasmic membrane), and thus conserves the redox energy in a proton gradient. This Blochmanniella floridana protein is NADH-quinone oxidoreductase subunit A.